A 150-amino-acid chain; its full sequence is Large ribosomal subunit protein bL9 (150 aa).

This sequence belongs to the bacterial ribosomal protein bL9 family.

Its function is as follows. Binds to the 23S rRNA. The sequence is that of Large ribosomal subunit protein bL9 from Verminephrobacter eiseniae (strain EF01-2).